The primary structure comprises 455 residues: Bifunctional protein GlmU (455 aa).

Residues 1–225 (MEVVILAAGQ…IWETLGVNSK (225 aa)) are pyrophosphorylase. UDP-N-acetyl-alpha-D-glucosamine is bound by residues 6–9 (LAAG), Lys-20, Gln-71, 76–77 (GT), 98–100 (YGD), Gly-135, Glu-150, Asn-165, and Asn-223. Asp-100 contacts Mg(2+). Asn-223 lines the Mg(2+) pocket. The segment at 226–246 (AQLAELERLHQRNIATRLMED) is linker. The N-acetyltransferase stretch occupies residues 247 to 455 (GVTLFDPSRI…KRPVKKKAGE (209 aa)). UDP-N-acetyl-alpha-D-glucosamine contacts are provided by Arg-329 and Lys-347. The active-site Proton acceptor is His-359. Residues Tyr-362 and Asn-373 each contribute to the UDP-N-acetyl-alpha-D-glucosamine site. Residues Ala-376, 382-383 (NY), Ser-401, Ala-419, and Arg-436 contribute to the acetyl-CoA site.

This sequence in the N-terminal section; belongs to the N-acetylglucosamine-1-phosphate uridyltransferase family. The protein in the C-terminal section; belongs to the transferase hexapeptide repeat family. As to quaternary structure, homotrimer. Mg(2+) serves as cofactor.

It is found in the cytoplasm. The enzyme catalyses alpha-D-glucosamine 1-phosphate + acetyl-CoA = N-acetyl-alpha-D-glucosamine 1-phosphate + CoA + H(+). It catalyses the reaction N-acetyl-alpha-D-glucosamine 1-phosphate + UTP + H(+) = UDP-N-acetyl-alpha-D-glucosamine + diphosphate. It functions in the pathway nucleotide-sugar biosynthesis; UDP-N-acetyl-alpha-D-glucosamine biosynthesis; N-acetyl-alpha-D-glucosamine 1-phosphate from alpha-D-glucosamine 6-phosphate (route II): step 2/2. Its pathway is nucleotide-sugar biosynthesis; UDP-N-acetyl-alpha-D-glucosamine biosynthesis; UDP-N-acetyl-alpha-D-glucosamine from N-acetyl-alpha-D-glucosamine 1-phosphate: step 1/1. The protein operates within bacterial outer membrane biogenesis; LPS lipid A biosynthesis. Catalyzes the last two sequential reactions in the de novo biosynthetic pathway for UDP-N-acetylglucosamine (UDP-GlcNAc). The C-terminal domain catalyzes the transfer of acetyl group from acetyl coenzyme A to glucosamine-1-phosphate (GlcN-1-P) to produce N-acetylglucosamine-1-phosphate (GlcNAc-1-P), which is converted into UDP-GlcNAc by the transfer of uridine 5-monophosphate (from uridine 5-triphosphate), a reaction catalyzed by the N-terminal domain. In Aromatoleum aromaticum (strain DSM 19018 / LMG 30748 / EbN1) (Azoarcus sp. (strain EbN1)), this protein is Bifunctional protein GlmU.